Consider the following 407-residue polypeptide: Transmembrane protein 184B (407 aa).

A compositionally biased stretch (low complexity) spans methionine 1–proline 28. A disordered region spans residues methionine 1–serine 31. The next 7 helical transmembrane spans lie at phenylalanine 40–isoleucine 60, isoleucine 84–asparagine 104, phenylalanine 121–methionine 141, leucine 178–glycine 198, valine 214–phenylalanine 234, phenylalanine 249–leucine 269, and valine 290–leucine 310. Residues threonine 369–asparagine 395 are disordered. Serine 388, serine 402, and serine 403 each carry phosphoserine.

Belongs to the TMEM184 family.

It localises to the membrane. Its function is as follows. May activate the MAP kinase signaling pathway. The polypeptide is Transmembrane protein 184B (Tmem184b) (Mus musculus (Mouse)).